Reading from the N-terminus, the 601-residue chain is ATP-dependent RNA helicase DeaD (601 aa).

The Q motif motif lies at 6-34 (STFSFLGLNPFIIQSLNEMGYVKPSPIQA). The Helicase ATP-binding domain occupies 37–208 (IPLLLEGRDV…KRFMRNPKEI (172 aa)). 50-57 (AQTGSGKT) lines the ATP pocket. The DEAD box signature appears at 156-159 (DEAD). The Helicase C-terminal domain occupies 231-378 (KTDALIRFLE…EVQLPKVELL (148 aa)). Residues 552–576 (SRHYENKTTHRSIFNKDKNSNRRVS) are compositionally biased toward basic and acidic residues. The segment at 552-601 (SRHYENKTTHRSIFNKDKNSNRRVSDGSFNKSNSPKKTEFKSSFFRRRNV) is disordered.

This sequence belongs to the DEAD box helicase family. DeaD/CsdA subfamily.

It localises to the cytoplasm. It carries out the reaction ATP + H2O = ADP + phosphate + H(+). Functionally, DEAD-box RNA helicase involved in various cellular processes at low temperature, including ribosome biogenesis, mRNA degradation and translation initiation. The protein is ATP-dependent RNA helicase DeaD of Buchnera aphidicola subsp. Acyrthosiphon pisum (strain APS) (Acyrthosiphon pisum symbiotic bacterium).